Consider the following 241-residue polypeptide: Purine nucleoside phosphorylase DeoD-type 1 (241 aa).

A purine D-ribonucleoside is bound at residue H5. Phosphate is bound by residues G21, R25, R44, and 88-91 (RVGS). Residues 180 to 182 (EME) and 204 to 205 (SD) contribute to the a purine D-ribonucleoside site. D205 serves as the catalytic Proton donor.

Belongs to the PNP/UDP phosphorylase family. In terms of assembly, homohexamer; trimer of homodimers.

The enzyme catalyses a purine D-ribonucleoside + phosphate = a purine nucleobase + alpha-D-ribose 1-phosphate. It catalyses the reaction a purine 2'-deoxy-D-ribonucleoside + phosphate = a purine nucleobase + 2-deoxy-alpha-D-ribose 1-phosphate. Catalyzes the reversible phosphorolytic breakdown of the N-glycosidic bond in the beta-(deoxy)ribonucleoside molecules, with the formation of the corresponding free purine bases and pentose-1-phosphate. The sequence is that of Purine nucleoside phosphorylase DeoD-type 1 from Photobacterium profundum (strain SS9).